Consider the following 235-residue polypeptide: Purine nucleoside phosphorylase DeoD-type (235 aa).

His-4 serves as a coordination point for a purine D-ribonucleoside. Residues Gly-20, Arg-24, Arg-43, and 87–90 (RVGT) contribute to the phosphate site. A purine D-ribonucleoside contacts are provided by residues 179–181 (EME) and 203–204 (SD). Asp-204 acts as the Proton donor in catalysis.

It belongs to the PNP/UDP phosphorylase family. In terms of assembly, homohexamer; trimer of homodimers.

It carries out the reaction a purine D-ribonucleoside + phosphate = a purine nucleobase + alpha-D-ribose 1-phosphate. It catalyses the reaction a purine 2'-deoxy-D-ribonucleoside + phosphate = a purine nucleobase + 2-deoxy-alpha-D-ribose 1-phosphate. Its function is as follows. Catalyzes the reversible phosphorolytic breakdown of the N-glycosidic bond in the beta-(deoxy)ribonucleoside molecules, with the formation of the corresponding free purine bases and pentose-1-phosphate. The sequence is that of Purine nucleoside phosphorylase DeoD-type from Clostridium perfringens (strain ATCC 13124 / DSM 756 / JCM 1290 / NCIMB 6125 / NCTC 8237 / Type A).